The sequence spans 193 residues: A-type ATP synthase subunit E (193 aa).

The protein belongs to the V-ATPase E subunit family. Has multiple subunits with at least A(3), B(3), C, D, E, F, H, I and proteolipid K(x).

It is found in the cell membrane. Component of the A-type ATP synthase that produces ATP from ADP in the presence of a proton gradient across the membrane. The chain is A-type ATP synthase subunit E from Haloquadratum walsbyi (strain DSM 16790 / HBSQ001).